The chain runs to 432 residues: Putative O-antigen transporter (432 aa).

The next 12 helical transmembrane spans lie at 14–34 (IIAA…LVSV), 47–67 (AVFT…IGIG), 90–110 (AAVH…FFLS), 134–154 (FIAS…KILF), 164–184 (IINA…HYLM), 189–209 (ITFA…IYIS), 234–254 (GFLI…IVMS), 271–291 (IFGL…PVCA), 305–325 (IIFL…LFIY), 334–354 (IIAN…LAVY), 376–396 (ILWL…WYFA), and 400–420 (GIVG…FWGL).

The protein localises to the cell inner membrane. It participates in bacterial outer membrane biogenesis; LPS O-antigen biosynthesis. Its function is as follows. May be involved in the translocation process of the nascent O-polysaccharide molecules and/or its ligation to lipid A core units. The polypeptide is Putative O-antigen transporter (rfbX) (Salmonella typhi).